A 231-amino-acid polypeptide reads, in one-letter code: tRNA (guanine-N(1)-)-methyltransferase (231 aa).

S-adenosyl-L-methionine is bound by residues glycine 112 and 132–137 (IGDYIL).

Belongs to the RNA methyltransferase TrmD family. As to quaternary structure, homodimer.

The protein localises to the cytoplasm. The catalysed reaction is guanosine(37) in tRNA + S-adenosyl-L-methionine = N(1)-methylguanosine(37) in tRNA + S-adenosyl-L-homocysteine + H(+). Its function is as follows. Specifically methylates guanosine-37 in various tRNAs. The chain is tRNA (guanine-N(1)-)-methyltransferase from Sulfurimonas denitrificans (strain ATCC 33889 / DSM 1251) (Thiomicrospira denitrificans (strain ATCC 33889 / DSM 1251)).